A 464-amino-acid chain; its full sequence is MAPGLPTAMDRPHFIGIGGAGMSGIAKILAQRGAKVAGSDAKESETAEALRALGATVHIGHAAEHLADDATCVVVSSAIRADNPELARAAELGIPVVHRSDALARLMDGLRPIAVAGTHGKTTTTSMLAVSLSTLGLAPSYAIGGDLDAPGSNALHGEGDIFVAEADESDRSFHKYAPDVAIVLNVELDHHANYASMDEIYASFETFVDRITEGGTLVIAADHEGARELTRRVTASGVRVVTYGESADADVCVLSVTAQGLKSEVEVLLDGTELTFTVSVPGRHYAHNAVAALAAGVALGIPAADLASALAAYTGVKRRLQLKGEEAGVQVIDSYAHHPTEMTADLEAMRAAAGDARILVVFQPHLFSRTQELGKEMGQALALADASVVLDIYPAREDPIPGITSELIIEAARAAGADVTPVHDKAEVPSVIAGMARPGDLVLTMGAGDVTELGPRILDRLSKQ.

117-123 (GTHGKTT) is an ATP binding site.

This sequence belongs to the MurCDEF family.

The protein localises to the cytoplasm. It catalyses the reaction UDP-N-acetyl-alpha-D-muramate + L-alanine + ATP = UDP-N-acetyl-alpha-D-muramoyl-L-alanine + ADP + phosphate + H(+). Its pathway is cell wall biogenesis; peptidoglycan biosynthesis. Its function is as follows. Cell wall formation. The chain is UDP-N-acetylmuramate--L-alanine ligase from Streptomyces avermitilis (strain ATCC 31267 / DSM 46492 / JCM 5070 / NBRC 14893 / NCIMB 12804 / NRRL 8165 / MA-4680).